The following is a 123-amino-acid chain: UPF0102 protein mma_0204 (123 aa).

Belongs to the UPF0102 family.

In Janthinobacterium sp. (strain Marseille) (Minibacterium massiliensis), this protein is UPF0102 protein mma_0204.